Reading from the N-terminus, the 180-residue chain is Large ribosomal subunit protein uL5 (180 aa).

Belongs to the universal ribosomal protein uL5 family. As to quaternary structure, part of the 50S ribosomal subunit; part of the 5S rRNA/L5/L18/L25 subcomplex. Contacts the 5S rRNA and the P site tRNA. Forms a bridge to the 30S subunit in the 70S ribosome.

This is one of the proteins that bind and probably mediate the attachment of the 5S RNA into the large ribosomal subunit, where it forms part of the central protuberance. In the 70S ribosome it contacts protein S13 of the 30S subunit (bridge B1b), connecting the 2 subunits; this bridge is implicated in subunit movement. Contacts the P site tRNA; the 5S rRNA and some of its associated proteins might help stabilize positioning of ribosome-bound tRNAs. This chain is Large ribosomal subunit protein uL5, found in Anaeromyxobacter dehalogenans (strain 2CP-1 / ATCC BAA-258).